The following is a 411-amino-acid chain: Dual-specificity RNA methyltransferase RlmN (411 aa).

Glu-124 (proton acceptor) is an active-site residue. Positions 130-379 constitute a Radical SAM core domain; sequence EEGRGTLCIS…IRTPRGRDIL (250 aa). A disulfide bridge connects residues Cys-137 and Cys-382. 3 residues coordinate [4Fe-4S] cluster: Cys-144, Cys-148, and Cys-151. S-adenosyl-L-methionine-binding positions include 208–209, Ser-240, 262–264, and Asn-339; these read GE and SLH. Cys-382 serves as the catalytic S-methylcysteine intermediate.

Belongs to the radical SAM superfamily. RlmN family. [4Fe-4S] cluster serves as cofactor.

It is found in the cytoplasm. The enzyme catalyses adenosine(2503) in 23S rRNA + 2 reduced [2Fe-2S]-[ferredoxin] + 2 S-adenosyl-L-methionine = 2-methyladenosine(2503) in 23S rRNA + 5'-deoxyadenosine + L-methionine + 2 oxidized [2Fe-2S]-[ferredoxin] + S-adenosyl-L-homocysteine. The catalysed reaction is adenosine(37) in tRNA + 2 reduced [2Fe-2S]-[ferredoxin] + 2 S-adenosyl-L-methionine = 2-methyladenosine(37) in tRNA + 5'-deoxyadenosine + L-methionine + 2 oxidized [2Fe-2S]-[ferredoxin] + S-adenosyl-L-homocysteine. Functionally, specifically methylates position 2 of adenine 2503 in 23S rRNA and position 2 of adenine 37 in tRNAs. m2A2503 modification seems to play a crucial role in the proofreading step occurring at the peptidyl transferase center and thus would serve to optimize ribosomal fidelity. The chain is Dual-specificity RNA methyltransferase RlmN from Sinorhizobium fredii (strain NBRC 101917 / NGR234).